The chain runs to 400 residues: U-box domain-containing protein 37 (400 aa).

Residues 229-298 adopt a coiled-coil conformation; sequence KEWESAYLEE…RKAKEERDLL (70 aa). Residues 324–398 form the U-box domain; sequence EAPQYFICPI…QEWLHASSSF (75 aa).

It catalyses the reaction S-ubiquitinyl-[E2 ubiquitin-conjugating enzyme]-L-cysteine + [acceptor protein]-L-lysine = [E2 ubiquitin-conjugating enzyme]-L-cysteine + N(6)-ubiquitinyl-[acceptor protein]-L-lysine.. The protein operates within protein modification; protein ubiquitination. Functions as an E3 ubiquitin ligase. In Arabidopsis thaliana (Mouse-ear cress), this protein is U-box domain-containing protein 37 (PUB37).